A 332-amino-acid chain; its full sequence is Nucleotide-binding protein RC1_2868 (332 aa).

The disordered stretch occupies residues 1–27; that stretch reads MTGQPLTMETAAGADAGTGAATHPADG. Residues 10-22 show a composition bias toward low complexity; that stretch reads TAAGADAGTGAAT. 36–43 provides a ligand contact to ATP; sequence GMSGGGLS. 82 to 85 is a GTP binding site; the sequence is DSRT. 2 stretches are compositionally biased toward basic and acidic residues: residues 302–312 and 322–332; these read GHRDLDRRHPA and VASRETPEEHR. The disordered stretch occupies residues 302-332; that stretch reads GHRDLDRRHPAPEPAPPWREVASRETPEEHR.

It belongs to the RapZ-like family.

Functionally, displays ATPase and GTPase activities. This chain is Nucleotide-binding protein RC1_2868, found in Rhodospirillum centenum (strain ATCC 51521 / SW).